The primary structure comprises 276 residues: NH(3)-dependent NAD(+) synthetase (276 aa).

43–50 (GISGGVDS) contacts ATP. Asp49 contacts Mg(2+). Arg146 contacts deamido-NAD(+). ATP is bound at residue Thr166. A Mg(2+)-binding site is contributed by Glu171. Lys179 and Asp186 together coordinate deamido-NAD(+). ATP contacts are provided by Lys195 and Thr217. 266–267 (HK) provides a ligand contact to deamido-NAD(+).

Belongs to the NAD synthetase family. In terms of assembly, homodimer.

It catalyses the reaction deamido-NAD(+) + NH4(+) + ATP = AMP + diphosphate + NAD(+) + H(+). It functions in the pathway cofactor biosynthesis; NAD(+) biosynthesis; NAD(+) from deamido-NAD(+) (ammonia route): step 1/1. Catalyzes the ATP-dependent amidation of deamido-NAD to form NAD. Uses ammonia as a nitrogen source. This chain is NH(3)-dependent NAD(+) synthetase, found in Vibrio atlanticus (strain LGP32) (Vibrio splendidus (strain Mel32)).